The following is a 238-amino-acid chain: Monocyte to macrophage differentiation factor (238 aa).

Residues 1–28 (MQFRNRFQRFMNHRAPANGRYKPTCYEH) lie on the Cytoplasmic side of the membrane. A helical membrane pass occupies residues 29–49 (AANCYTHAFLIVPAIVGSALL). Topologically, residues 50-61 (HRLSDDCWEKIT) are lumenal. The helical transmembrane segment at 62 to 82 (AWIYGMGLCALFIVSTVFHIV) threads the bilayer. The Cytoplasmic portion of the chain corresponds to 83–101 (SWKKSHLRTVEHCFHMCDR). The helical transmembrane segment at 102–122 (MVIYFFIAASYAPWLNLRELG) threads the bilayer. A topological domain (lumenal) is located at residue Pro123. Residues 124 to 144 (LASHMRWFIWLMAAGGTIYVF) traverse the membrane as a helical segment. Residues 145 to 151 (LYHEKYK) lie on the Cytoplasmic side of the membrane. Residues 152-172 (VVELFFYLTMGFSPALVVTSM) traverse the membrane as a helical segment. Residues 173 to 174 (NN) lie on the Lumenal side of the membrane. Residues 175-195 (TDGLQELACGGLIYCLGVVFF) traverse the membrane as a helical segment. Topologically, residues 196–198 (KSD) are cytoplasmic. The helical transmembrane segment at 199-219 (GIIPFAHAIWHLFVATAAAVH) threads the bilayer. At 220–238 (YYAIWKYLYRSPTDFIRHL) the chain is on the lumenal side.

The protein belongs to the ADIPOR family. In terms of tissue distribution, preferentially expressed in the brain.

It localises to the late endosome membrane. The protein localises to the lysosome membrane. Its function is as follows. Is involved in the dynamics of lysosomal membranes associated with microglial activation following brain lesion. The sequence is that of Monocyte to macrophage differentiation factor from Rattus norvegicus (Rat).